The primary structure comprises 218 residues: DNA-directed RNA polymerase III subunit RPC7-like (218 aa).

The interval 130–218 is disordered; the sequence is TIILPKRPPK…SDDNMDEAIY (89 aa). Residues 139–160 show a composition bias toward basic and acidic residues; it reads KTTEDKEETIQKLETLEKKEEE. Acidic residues-rich tracts occupy residues 161-193 and 201-218; these read VTSEEDEEKEEEEEKEEEEEEEYDEEEHEEETD and NGEDFGGDSDDNMDEAIY.

It belongs to the eukaryotic RPC7 RNA polymerase subunit family. In terms of assembly, component of the RNA polymerase III (Pol III) complex consisting of 17 subunits. Pol III exists as two alternative complexes defined by the mutually exclusive incorporation of subunit POLR3G/RPC7alpha or POLR3GL/RPC7beta. Found in a trimeric complex with POLR3C/RPC3 and POLR3F/RPC6. Directly interacts with POLR3C.

The protein localises to the nucleus. In terms of biological role, DNA-dependent RNA polymerase catalyzes the transcription of DNA into RNA using the four ribonucleoside triphosphates as substrates. Specific peripheric component of RNA polymerase III which synthesizes small RNAs, such as 5S rRNA and tRNAs. This chain is DNA-directed RNA polymerase III subunit RPC7-like (POLR3GL), found in Bos taurus (Bovine).